The chain runs to 544 residues: Membrane protein insertase YidC (544 aa).

Helical transmembrane passes span 6-26 (NLLLIALLFVTFMLWQAWETD), 343-363 (KFLHGFIGNWGFSIIAITFIV), 418-438 (LGGCLPLVIQMPIFLALYYML), 456-476 (LSAQDPYYILPILMGVTMFFI), and 497-517 (PVIFTVFFLWFPSGLVMYYIV).

This sequence belongs to the OXA1/ALB3/YidC family. Type 1 subfamily. As to quaternary structure, interacts with the Sec translocase complex via SecD. Specifically interacts with transmembrane segments of nascent integral membrane proteins during membrane integration.

Its subcellular location is the cell inner membrane. In terms of biological role, required for the insertion and/or proper folding and/or complex formation of integral membrane proteins into the membrane. Involved in integration of membrane proteins that insert both dependently and independently of the Sec translocase complex, as well as at least some lipoproteins. Aids folding of multispanning membrane proteins. The polypeptide is Membrane protein insertase YidC (Pectobacterium atrosepticum (strain SCRI 1043 / ATCC BAA-672) (Erwinia carotovora subsp. atroseptica)).